A 170-amino-acid polypeptide reads, in one-letter code: Adenine phosphoribosyltransferase (170 aa).

The protein belongs to the purine/pyrimidine phosphoribosyltransferase family. As to quaternary structure, homodimer.

It localises to the cytoplasm. It catalyses the reaction AMP + diphosphate = 5-phospho-alpha-D-ribose 1-diphosphate + adenine. It functions in the pathway purine metabolism; AMP biosynthesis via salvage pathway; AMP from adenine: step 1/1. Catalyzes a salvage reaction resulting in the formation of AMP, that is energically less costly than de novo synthesis. The polypeptide is Adenine phosphoribosyltransferase (Mycoplasmopsis agalactiae (strain NCTC 10123 / CIP 59.7 / PG2) (Mycoplasma agalactiae)).